The following is a 161-amino-acid chain: Cyclic pyranopterin monophosphate synthase (161 aa).

Residues 78–80 and 116–117 each bind substrate; these read LCH and ME. The active site involves aspartate 131.

This sequence belongs to the MoaC family. As to quaternary structure, homohexamer; trimer of dimers.

The catalysed reaction is (8S)-3',8-cyclo-7,8-dihydroguanosine 5'-triphosphate = cyclic pyranopterin phosphate + diphosphate. It participates in cofactor biosynthesis; molybdopterin biosynthesis. Catalyzes the conversion of (8S)-3',8-cyclo-7,8-dihydroguanosine 5'-triphosphate to cyclic pyranopterin monophosphate (cPMP). The sequence is that of Cyclic pyranopterin monophosphate synthase from Bordetella parapertussis (strain 12822 / ATCC BAA-587 / NCTC 13253).